Reading from the N-terminus, the 336-residue chain is tRNA-splicing endonuclease (336 aa).

Active-site residues include Tyr-271, His-282, and Lys-313.

The protein belongs to the tRNA-intron endonuclease family. Archaeal long subfamily. As to quaternary structure, homodimer.

The catalysed reaction is pretRNA = a 3'-half-tRNA molecule with a 5'-OH end + a 5'-half-tRNA molecule with a 2',3'-cyclic phosphate end + an intron with a 2',3'-cyclic phosphate and a 5'-hydroxyl terminus.. Its function is as follows. Endonuclease that removes tRNA introns. Cleaves pre-tRNA at the 5'- and 3'-splice sites to release the intron. The products are an intron and two tRNA half-molecules bearing 2',3' cyclic phosphate and 5'-OH termini. Recognizes a pseudosymmetric substrate in which 2 bulged loops of 3 bases are separated by a stem of 4 bp. The polypeptide is tRNA-splicing endonuclease (Natronomonas pharaonis (strain ATCC 35678 / DSM 2160 / CIP 103997 / JCM 8858 / NBRC 14720 / NCIMB 2260 / Gabara) (Halobacterium pharaonis)).